A 582-amino-acid polypeptide reads, in one-letter code: Guanine nucleotide-binding protein-like NSN1 (582 aa).

Positions M1–R46 are enriched in basic residues. The tract at residues M1 to P58 is disordered. Residues V2–K49 form a basic region. 3 consecutive short sequence motifs (nuclear localization signal) follow at residues S5–R12, L22–H29, and V69–E76. Positions L15–L94 form a coiled coil. Positions Y127–L311 constitute a CP-type G domain. A DARXP motif motif is present at residues D145–P149. Positions N175–D178 are G4. N175–D178 contacts GTP. The G5 stretch occupies residues K202–S204. The tract at residues G260–S267 is G1. N263 to S268 provides a ligand contact to GTP. An intermediate region spans residues V281–S456. The interval G286–S290 is G2. GTP is bound by residues D304–G307 and G307. The interval D304 to G307 is G3. The tract at residues D463 to D551 is acidic. The tract at residues D469–L545 is disordered. Over residues E476–E496 the composition is skewed to acidic residues. Basic and acidic residues predominate over residues A497–T506. A coiled-coil region spans residues A515–K537. The Nuclear localization signal 4 motif lies at T522–K529. Residues K523–K537 are compositionally biased toward basic residues.

Belongs to the TRAFAC class YlqF/YawG GTPase family. Interacts with EBP2 and PES. Mostly expressed in flowers, siliques and inflorescence apex, and, to a lower extent, in stems and leaves.

Its subcellular location is the nucleus. It localises to the nucleolus. In terms of biological role, involved in the differentiation of epidermal cells, probably via the regulation of the expression of meristem-related genes (e.g. CLV3, STM, KNAT1, CUC2 and AG) and of leaf polarity-related genes (e.g. YAB5, FIL, AS2, PHB and PHV). May play a role in regulating cellular proliferation. Necessary for flower development, probably by preventing apical dominance through the down-regulation of AG expression. Required for embryogenesis, leaf and cotyledon development, as well as for leaf polarity establishment. Plays an important role in plant growth and senescence by modulating ribosome biogenesis in nucleolus. Possesses GTPAse activity in vitro. Possesses RNA binding activity in vitro. Associates with ribosomes. This is Guanine nucleotide-binding protein-like NSN1 from Arabidopsis thaliana (Mouse-ear cress).